We begin with the raw amino-acid sequence, 135 residues long: UPF0102 protein PGN_1801 (135 aa).

It belongs to the UPF0102 family.

The polypeptide is UPF0102 protein PGN_1801 (Porphyromonas gingivalis (strain ATCC 33277 / DSM 20709 / CIP 103683 / JCM 12257 / NCTC 11834 / 2561)).